Here is a 259-residue protein sequence, read N- to C-terminus: Ribosomal RNA small subunit methyltransferase A (259 aa).

Residues N13, L15, G40, E61, D85, and N103 each contribute to the S-adenosyl-L-methionine site.

It belongs to the class I-like SAM-binding methyltransferase superfamily. rRNA adenine N(6)-methyltransferase family. RsmA subfamily.

The protein localises to the cytoplasm. The catalysed reaction is adenosine(1518)/adenosine(1519) in 16S rRNA + 4 S-adenosyl-L-methionine = N(6)-dimethyladenosine(1518)/N(6)-dimethyladenosine(1519) in 16S rRNA + 4 S-adenosyl-L-homocysteine + 4 H(+). In terms of biological role, specifically dimethylates two adjacent adenosines (A1518 and A1519) in the loop of a conserved hairpin near the 3'-end of 16S rRNA in the 30S particle. May play a critical role in biogenesis of 30S subunits. The protein is Ribosomal RNA small subunit methyltransferase A of Neisseria meningitidis serogroup C / serotype 2a (strain ATCC 700532 / DSM 15464 / FAM18).